An 821-amino-acid chain; its full sequence is G-type lectin S-receptor-like serine/threonine-protein kinase SD2-5 (821 aa).

A signal peptide spans 1 to 21 (MRGVFIVIVTCLVFLPDPLRA). The Extracellular portion of the chain corresponds to 22–429 (GVASIGSITP…NGEDDGKHFP (408 aa)). Residues 33–148 (FGGSQMNYIN…DGTSIWESFD (116 aa)) enclose the Bulb-type lectin domain. N-linked (GlcNAc...) asparagine glycans are attached at residues N51, N121, N174, and N248. One can recognise an EGF-like; atypical domain in the interval 280-314 (PSDLCGTPEPCGPYYVCSGSKVCGCVSGLSRARSD). Cystine bridges form between C284–C296 and C290–C302. Positions 323-411 (CKKTKDNATL…SGFVSYIKIA (89 aa)) constitute a PAN domain. N-linked (GlcNAc...) asparagine glycans are attached at residues N329, N370, and N380. Cystine bridges form between C363–C385 and C367–C373. Residues 430-450 (YVVIIVVVTVFIIAVLIFVAF) traverse the membrane as a helical segment. Residues 451-821 (RIHKRKKMIL…LSAVRLSGPR (371 aa)) lie on the Cytoplasmic side of the membrane. The Protein kinase domain occupies 493–768 (NNFSVKLGQG…KVVQMLEGVF (276 aa)). ATP is bound by residues 499-507 (LGQGGFGSV) and K521. Positions 581–599 (KDGDVLLDWDTRFNIALGT) are caM-binding. Residue D618 is the Proton acceptor of the active site. Residue S635 is modified to Phosphoserine. A Phosphothreonine modification is found at T652.

The protein belongs to the protein kinase superfamily. Ser/Thr protein kinase family. Interacts with PUB9, PUB13, PUB14 and PUB29.

It localises to the membrane. The catalysed reaction is L-seryl-[protein] + ATP = O-phospho-L-seryl-[protein] + ADP + H(+). It carries out the reaction L-threonyl-[protein] + ATP = O-phospho-L-threonyl-[protein] + ADP + H(+). This Arabidopsis thaliana (Mouse-ear cress) protein is G-type lectin S-receptor-like serine/threonine-protein kinase SD2-5 (SD25).